A 960-amino-acid chain; its full sequence is Gamma-aminobutyric acid type B receptor subunit 1 (960 aa).

Positions 1–19 (MLLLLLVPLFLRPLGAGGA) are cleaved as a signal peptide. Residues 20–590 (QTPNATSEGC…KTFRFLSQKL (571 aa)) are Extracellular-facing. N-linked (GlcNAc...) asparagine glycosylation is found at Asn23 and Asn83. Sushi domains follow at residues 29-95 (CQII…PSRC) and 97-158 (RICS…HCQV). 3 disulfides stabilise this stretch: Cys99/Cys144, Cys130/Cys156, and Cys219/Cys245. 4-aminobutanoate contacts are provided by Ser246, Ser269, His286, and Tyr366. An intrachain disulfide couples Cys375 to Cys409. N-linked (GlcNAc...) asparagine glycans are attached at residues Asn408 and Asn439. Residue Glu465 coordinates 4-aminobutanoate. 3 N-linked (GlcNAc...) asparagine glycosylation sites follow: Asn481, Asn501, and Asn513. Residues 591 to 611 (FISVSVLSSLGIVLAVVCLSF) form a helical membrane-spanning segment. The Cytoplasmic segment spans residues 612–630 (NIYNSHVRYIQNSQPNLNN). The chain crosses the membrane as a helical span at residues 631–651 (LTAVGCSLALAAVFPLGLDGY). Residues 652-666 (HIGRSQFPFVCQARL) lie on the Extracellular side of the membrane. The helical transmembrane segment at 667–687 (WLLGLGFSLGYGSMFTKIWWV) threads the bilayer. Residues 688 to 709 (HTVFTKKEEKKEWRKTLEPWKL) are Cytoplasmic-facing. Residues 710–730 (YATVGLLVGMDVLTLAIWQIV) traverse the membrane as a helical segment. At 731–767 (DPLHRTIETFAKEEPKEDIDVSILPQLEHCSSKKMNT) the chain is on the extracellular side. The helical transmembrane segment at 768-788 (WLGIFYGYKGLLLLLGIFLAY) threads the bilayer. The Cytoplasmic segment spans residues 789–803 (ETKSVSTEKINDHRA). Residues 804 to 824 (VGMAIYNVAVLCLITAPVTMI) traverse the membrane as a helical segment. Residues 825–832 (LSSQQDAA) lie on the Extracellular side of the membrane. The helical transmembrane segment at 833–853 (FAFASLAIVFSSYITLVVLFV) threads the bilayer. At 854–960 (PKMRRLITRG…DGSRVHLLYK (107 aa)) the chain is on the cytoplasmic side. Over residues 866-879 (QSETQDTMKTGSST) the composition is skewed to polar residues. 2 disordered regions span residues 866 to 891 (QSET…RLLE) and 908 to 960 (VSEL…LLYK). The stretch at 870-924 (QDTMKTGSSTNNNEEEKSRLLEKENRELEKIIAEKEERVSELRHQLQSRQQLRSR) forms a coiled coil. Thr872 bears the Phosphothreonine mark. The segment at 887–915 (SRLLEKENRELEKIIAEKEERVSELRHQL) is interaction with ATF4. Thr929 is subject to Phosphothreonine.

This sequence belongs to the G-protein coupled receptor 3 family. GABA-B receptor subfamily. In terms of assembly, heterodimer of GABBR1 and GABBR2. Homodimers may form, but are inactive. Interacts (via C-terminus) with ATF4 (via leucine zipper domain). Interacts with JAKMIP1. As to expression, ubiquitously expressed in tissues including the forebrain, cerebellum, eye, atrium, ventricle, lung, stomach, small intestine, colon, liver, spleen, kidney, urinary bladder and skeletal muscle. Expressed at low levels in testis, and more highly in brain regions. Expression is high the brain regions including cerebral cortical layers, with higher expression in VIb than in the II-V layers, pyramidal CA1-CA3 cell layers and granular cell layers of the hippocampus, granular cell layers of the dentate gyrus, including the caudate, putamen, nucleus accumbens and olfactory tubercle, the granular layer cell layers of the medial habenula, in the cerebellum, predominantly in Purkinje cells, and in the granule cell layer. Also expressed in areas of the brain including the medial geniculate nucleus, substantia nigra, pars compacta, the ventral tegmental area, and in several thalamic, amygdaloid and hypothalamic nuclei, such as the arcuate nucleus of the hypothalamus and mammilary bodies of the hypothalamus. Expressed in the amacrine cell of the retina. Expressed in the brain, spinal cord, stomach, testis, adrenal gland, pituitary, spleen and prostate. In terms of tissue distribution, expressed in the brain, spinal cord, stomach, testis, kidney and liver. As to expression, ubiquitously expressed. Expressed in the forebrain, cerebellum, eye, kidney and urinary bladder. In terms of tissue distribution, ubiquitously expressed with high expression in the pyramidal CA1-CA3 cell layers of the hippocampus, the granule cell layers of the dentate gyrus and olfactory tubercle, the whole cortex, and Purkinje cells of the cerebellum. Moderate expression in the granule cell layer of the cerebellum.

It localises to the cell membrane. It is found in the postsynaptic cell membrane. The protein localises to the cell projection. The protein resides in the dendrite. Its subcellular location is the perikaryon. Component of a heterodimeric G-protein coupled receptor for GABA, formed by GABBR1 and GABBR2. Within the heterodimeric GABA receptor, only GABBR1 seems to bind agonists, while GABBR2 mediates coupling to G proteins. Ligand binding causes a conformation change that triggers signaling via guanine nucleotide-binding proteins (G proteins) and modulates the activity of down-stream effectors, such as adenylate cyclase. Signaling inhibits adenylate cyclase, stimulates phospholipase A2, activates potassium channels, inactivates voltage-dependent calcium-channels and modulates inositol phospholipid hydrolysis. Calcium is required for high affinity binding to GABA. Plays a critical role in the fine-tuning of inhibitory synaptic transmission. Pre-synaptic GABA receptor inhibits neurotransmitter release by down-regulating high-voltage activated calcium channels, whereas postsynaptic GABA receptor decreases neuronal excitability by activating a prominent inwardly rectifying potassium (Kir) conductance that underlies the late inhibitory postsynaptic potentials. Not only implicated in synaptic inhibition but also in hippocampal long-term potentiation, slow wave sleep, muscle relaxation and antinociception. In Rattus norvegicus (Rat), this protein is Gamma-aminobutyric acid type B receptor subunit 1 (Gabbr1).